The sequence spans 347 residues: Phosphoribosylformylglycinamidine cyclo-ligase (347 aa).

It belongs to the AIR synthase family.

The protein resides in the cytoplasm. It catalyses the reaction 2-formamido-N(1)-(5-O-phospho-beta-D-ribosyl)acetamidine + ATP = 5-amino-1-(5-phospho-beta-D-ribosyl)imidazole + ADP + phosphate + H(+). The protein operates within purine metabolism; IMP biosynthesis via de novo pathway; 5-amino-1-(5-phospho-D-ribosyl)imidazole from N(2)-formyl-N(1)-(5-phospho-D-ribosyl)glycinamide: step 2/2. The sequence is that of Phosphoribosylformylglycinamidine cyclo-ligase from Syntrophus aciditrophicus (strain SB).